Here is a 460-residue protein sequence, read N- to C-terminus: Signal recognition particle 54 kDa protein (460 aa).

Residues 104–111, 184–188, and 242–245 each bind GTP; these read GLQGSGKT, DTAGR, and TKLD.

It belongs to the GTP-binding SRP family. SRP54 subfamily. In terms of assembly, part of the signal recognition particle protein translocation system, which is composed of SRP and FtsY. Archaeal SRP consists of a 7S RNA molecule of 300 nucleotides and two protein subunits: SRP54 and SRP19.

It is found in the cytoplasm. The enzyme catalyses GTP + H2O = GDP + phosphate + H(+). In terms of biological role, involved in targeting and insertion of nascent membrane proteins into the cytoplasmic membrane. Binds to the hydrophobic signal sequence of the ribosome-nascent chain (RNC) as it emerges from the ribosomes. The SRP-RNC complex is then targeted to the cytoplasmic membrane where it interacts with the SRP receptor FtsY. The sequence is that of Signal recognition particle 54 kDa protein from Halobacterium salinarum (strain ATCC 29341 / DSM 671 / R1).